The sequence spans 145 residues: Lysozyme-like protein 4 (145 aa).

The first 19 residues, 1-19, serve as a signal peptide directing secretion; that stretch reads MQLYLVLLLISYLLTPIGA. Positions 20–145 constitute a C-type lysozyme domain; that stretch reads SILGRCVVAK…LDRWLDGCEL (126 aa). Disulfide bonds link Cys25-Cys143, Cys49-Cys130, Cys84-Cys95, and Cys91-Cys109. Residue Glu54 is part of the active site.

Belongs to the glycosyl hydrolase 22 family. Monomer. In terms of tissue distribution, expressed in the brain, lung, ovary, uterus and testis. In testis expressed in the germinal epithelium and on the maturing spermatozoa (at protein level).

Its subcellular location is the secreted. It localises to the cytoplasmic vesicle. The protein localises to the secretory vesicle. The protein resides in the acrosome. It is found in the cell projection. Its subcellular location is the cilium. It localises to the flagellum. In terms of biological role, may be involved in fertilization. Has no detectable bacteriolytic and lysozyme activities in vitro. The protein is Lysozyme-like protein 4 (Lyzl4) of Rattus norvegicus (Rat).